Consider the following 442-residue polypeptide: MAKPIVAIVGRPNVGKSTLFNRLTGGRVAIVEDQPGVTRDRLYRDANWLDREFTVVDTGGLDFGDRENPFSAIIHKQAEAAMEEADVILFLVDGRSGITADDEAVAAILRKAKKPVFLVVNKIEDFSQRERYFDFYSLGLGEPIPISASHGMNTGDLLDAVVAVLPENNGEDDDPDTIKIAVIGRPNVGKSSLVNAILGQERVIVSDIPGTTRDAIDTAFDRDGKRYILIDTAGMRRKGRIEEAVERYSVMRSLRAIDRSDVVLMVIDASQGVTEQDKKIAGYAHEAGKACVLVLNKWDLVPKDDKTMSRFDKVVRSEMSFLAYAPTIYVSALTKQRLPKILELVDFVAEQATRRISTSVLNELLADIQRVTPAPTDRGRRLKILFVTQTAVKPPTFVFFVNDEDLFHFSYRRHVENRFRETFGFEGVPMRFFIREREKEKD.

2 consecutive EngA-type G domains span residues proline 4–asparagine 169 and isoleucine 178–threonine 353. GTP is bound by residues glycine 10 to serine 17, aspartate 57 to leucine 61, asparagine 121 to glutamate 124, glycine 184 to serine 191, aspartate 231 to methionine 235, and asparagine 296 to aspartate 299. The KH-like domain maps to arginine 354–glutamate 438.

Belongs to the TRAFAC class TrmE-Era-EngA-EngB-Septin-like GTPase superfamily. EngA (Der) GTPase family. As to quaternary structure, associates with the 50S ribosomal subunit.

GTPase that plays an essential role in the late steps of ribosome biogenesis. The polypeptide is GTPase Der (Heliobacterium modesticaldum (strain ATCC 51547 / Ice1)).